The primary structure comprises 421 residues: Serine hydroxymethyltransferase (421 aa).

Residues leucine 123 and 127–129 (GHL) contribute to the (6S)-5,6,7,8-tetrahydrofolate site. An N6-(pyridoxal phosphate)lysine modification is found at lysine 232.

The protein belongs to the SHMT family. In terms of assembly, homodimer. Pyridoxal 5'-phosphate serves as cofactor.

The protein localises to the cytoplasm. The enzyme catalyses (6R)-5,10-methylene-5,6,7,8-tetrahydrofolate + glycine + H2O = (6S)-5,6,7,8-tetrahydrofolate + L-serine. The protein operates within one-carbon metabolism; tetrahydrofolate interconversion. Its pathway is amino-acid biosynthesis; glycine biosynthesis; glycine from L-serine: step 1/1. Its function is as follows. Catalyzes the reversible interconversion of serine and glycine with tetrahydrofolate (THF) serving as the one-carbon carrier. This reaction serves as the major source of one-carbon groups required for the biosynthesis of purines, thymidylate, methionine, and other important biomolecules. Also exhibits THF-independent aldolase activity toward beta-hydroxyamino acids, producing glycine and aldehydes, via a retro-aldol mechanism. This chain is Serine hydroxymethyltransferase, found in Ehrlichia ruminantium (strain Gardel).